Consider the following 426-residue polypeptide: Enolase (426 aa).

Gln163 serves as a coordination point for (2R)-2-phosphoglycerate. Glu205 acts as the Proton donor in catalysis. Mg(2+) contacts are provided by Asp242, Glu286, and Asp313. Residues Lys338, Arg367, Ser368, and Lys389 each contribute to the (2R)-2-phosphoglycerate site. Lys338 acts as the Proton acceptor in catalysis.

The protein belongs to the enolase family. Mg(2+) serves as cofactor.

It is found in the cytoplasm. It localises to the secreted. The protein localises to the cell surface. The enzyme catalyses (2R)-2-phosphoglycerate = phosphoenolpyruvate + H2O. It participates in carbohydrate degradation; glycolysis; pyruvate from D-glyceraldehyde 3-phosphate: step 4/5. Its function is as follows. Catalyzes the reversible conversion of 2-phosphoglycerate (2-PG) into phosphoenolpyruvate (PEP). It is essential for the degradation of carbohydrates via glycolysis. The protein is Enolase of Helicobacter pylori (strain G27).